We begin with the raw amino-acid sequence, 476 residues long: Ribulose bisphosphate carboxylase/oxygenase activase 1, chloroplastic (476 aa).

Residues 1–56 (MAAAYSTVGAVNRAPLSLNGSGARASLVPSTAFFGSSLKKSAAKFPKASSGNFKIV) constitute a chloroplast transit peptide. 165–172 (GGKGQGKS) is a binding site for ATP.

The protein belongs to the RuBisCO activase family.

Its subcellular location is the plastid. It localises to the chloroplast stroma. Activation of RuBisCO (ribulose-1,5-bisphosphate carboxylase/oxygenase; EC 4.1.1.39) involves the ATP-dependent carboxylation of the epsilon-amino group of lysine leading to a carbamate structure. The polypeptide is Ribulose bisphosphate carboxylase/oxygenase activase 1, chloroplastic (RCA1) (Larrea tridentata (Creosote bush)).